The following is a 209-amino-acid chain: Claudin-4 (209 aa).

Topologically, residues 1 to 9 are cytoplasmic; that stretch reads MASMGLQVT. An interaction with EPHA2 region spans residues 1–103; it reads MASMGLQVTG…GVLLSVVGGK (103 aa). A helical transmembrane segment spans residues 10-30; that stretch reads GIALAVLGWLAVMLCCALPMW. Residues 31–81 lie on the Extracellular side of the membrane; sequence RVTAFIGSNIVTSQTIWEGLWMNCVVQSTGQMQCKVYDSLLALPQDLQAAR. An intrachain disulfide couples Cys54 to Cys64. The chain crosses the membrane as a helical span at residues 82–102; the sequence is ALVIISIIVAALGVLLSVVGG. Residues 103–117 are Cytoplasmic-facing; sequence KCTNCLEDESAKAKT. The chain crosses the membrane as a helical span at residues 118 to 138; that stretch reads MIVAGVVFLLAGLLVIVPVSW. At 139–160 the chain is on the extracellular side; the sequence is TAHNIIQDFYNPLVASGQKREM. The chain crosses the membrane as a helical span at residues 161-181; that stretch reads GASLYVGWAASGLLLLGGGLL. Residues 182-209 are Cytoplasmic-facing; it reads CCNCPPRTDKPYSAKYSAARSAAASNYV. Position 208 is a phosphotyrosine; by EPHA2 (Tyr208). The interval 208–209 is interactions with TJP1, TJP2 and TJP3; it reads YV.

Belongs to the claudin family. As to quaternary structure, interacts with EPHA2; phosphorylates CLDN4 and may regulate tight junctions. Directly interacts with TJP1/ZO-1, TJP2/ZO-2 and TJP3/ZO-3. Interacts with CLDN1. Interacts with CLDN8. Phosphorylated. Phosphorylation by EPHA2 is stimulated by EFNA1 and alters interaction with TJP1.

The protein localises to the cell junction. Its subcellular location is the tight junction. It is found in the cell membrane. Its function is as follows. Channel-forming tight junction protein that mediates paracellular chloride transport in the kidney. Plays a critical role in the paracellular reabsorption of filtered chloride in the kidney collecting ducts. Claudins play a major role in tight junction-specific obliteration of the intercellular space, through calcium-independent cell-adhesion activity. In Chlorocebus aethiops (Green monkey), this protein is Claudin-4 (CLDN4).